The sequence spans 188 residues: MVNVNNFKNGITFQEEDEIFSVIEAQHSKQGRGQASVKAKVKNLRTGAITIKSYTGGDKVKKAHIEKIEMNFLYDEGENIVLMDNATYEQISIPKTRVEWEMNFLVEGAKVHIRKFADEILDIEIPVNIELKVIDAPEAVKGNTSSNPQKKVKVETGFELETPLFIKEGEIIIVSSETGKYMGKGNNK.

It belongs to the elongation factor P family.

The protein localises to the cytoplasm. It participates in protein biosynthesis; polypeptide chain elongation. In terms of biological role, involved in peptide bond synthesis. Stimulates efficient translation and peptide-bond synthesis on native or reconstituted 70S ribosomes in vitro. Probably functions indirectly by altering the affinity of the ribosome for aminoacyl-tRNA, thus increasing their reactivity as acceptors for peptidyl transferase. In Mycoplasma mobile (strain ATCC 43663 / 163K / NCTC 11711) (Mesomycoplasma mobile), this protein is Elongation factor P.